The primary structure comprises 345 residues: Putative membrane protein ORF59 (345 aa).

4 consecutive transmembrane segments (helical) span residues 46 to 63, 101 to 118, 147 to 165, and 265 to 286; these read LVFA…MMLI, IVFV…LVFL, IFGI…FSIL, and VVPV…WMVI.

The protein localises to the membrane. The protein is Putative membrane protein ORF59 (ORF59) of Ictalurid herpesvirus 1 (strain Auburn) (IcHV-1).